A 329-amino-acid polypeptide reads, in one-letter code: Arylacetonitrilase (329 aa).

One can recognise a CN hydrolase domain in the interval 6–279; it reads VRVAVTQAEP…EGIVYANLDM (274 aa). Glu46 acts as the Proton acceptor in catalysis. Lys126 is an active-site residue. Residue Cys161 is the Nucleophile of the active site.

The protein belongs to the carbon-nitrogen hydrolase superfamily. Nitrilase family.

It catalyses the reaction a nitrile + 2 H2O = a carboxylate + NH4(+). The enzyme catalyses 4-chlorophenylacetonitrile + 2 H2O = 4-chlorophenylacetate + NH4(+). Its function is as follows. Nitrilase that hydrolyzes preferentially phenylacetonitrile and heteroaromatic nitriles, but has significantly lower activity for (R,S)-mandelonitrile. Also acts on dinitriles like phenylenediacetonitriles (PDAs) 1,2-PDA, 1,3-PDA, and 1,4-PDA, and cyanophenyl acetonitriles (CPAs) 2-CPA and 4-CPA. This is Arylacetonitrilase from Hypocrea virens (strain Gv29-8 / FGSC 10586) (Gliocladium virens).